The sequence spans 206 residues: LexA repressor (206 aa).

Positions 28 to 48 form a DNA-binding region, H-T-H motif; it reads VREIGEAVGLASSSTVHGHLA. Residues Ser128 and Lys166 each act as for autocatalytic cleavage activity in the active site.

Belongs to the peptidase S24 family. Homodimer.

The catalysed reaction is Hydrolysis of Ala-|-Gly bond in repressor LexA.. In terms of biological role, represses a number of genes involved in the response to DNA damage (SOS response), including recA and lexA. In the presence of single-stranded DNA, RecA interacts with LexA causing an autocatalytic cleavage which disrupts the DNA-binding part of LexA, leading to derepression of the SOS regulon and eventually DNA repair. This chain is LexA repressor, found in Bacillus velezensis (strain DSM 23117 / BGSC 10A6 / LMG 26770 / FZB42) (Bacillus amyloliquefaciens subsp. plantarum).